Here is a 2812-residue protein sequence, read N- to C-terminus: Zonadhesin (2812 aa).

The first 17 residues, 1–17, serve as a signal peptide directing secretion; it reads MVPPVWTLLLLVGAALF. Topologically, residues 18–2757 are extracellular; the sequence is RKEKPPDQKL…DAPPPRKPAS (2740 aa). 3 consecutive MAM domains span residues 39-204, 209-368, and 371-536; these read TQCD…SCNR, QTCS…PCGE, and PQCD…TCPV. Residues 61–84 are disordered; sequence EDWVRASGPSPTGSTGAPGGYPNG. Over residues 66–75 the composition is skewed to low complexity; it reads ASGPSPTGST. 2 N-linked (GlcNAc...) asparagine glycosylation sites follow: Asn333 and Asn493. 2 disordered regions span residues 545 to 884 and 904 to 929; these read VSPV…PTEK and EKPT…KPTI. Positions 547 to 558 are enriched in low complexity; it reads PVSSTGPSETTG. A compositionally biased stretch (polar residues) spans 559 to 570; that stretch reads LTENPTISTKKP. Residues 573–1041 are 66 X heptapeptide repeats (approximate) (mucin-like domain); the sequence is SIEKPSVTTE…GTTTTSRSST (469 aa). Low complexity-rich tracts occupy residues 592-603, 651-675, 713-842, 853-868, and 916-929; these read TIPTEKPTISTE, TEKP…MEEP, SPEK…STEK, STEK…TISP, and STEK…KPTI. In terms of domain architecture, TIL 1 spans 1044–1093; it reads CPPNARYESCACPASCKSPRPSCGPLCREGCVCNPGFLFSDNHCIQASSC. One can recognise a VWFC 1 domain in the interval 1103-1148; sequence EPGAEWFSPNCTEHCRCWPGSRVECQISQCGTHTVCQLKNGQYGCH. Residues Asn1112 and Asn1188 are each glycosylated (N-linked (GlcNAc...) asparagine). The 178-residue stretch at 1154–1331 folds into the VWFD 1 domain; the sequence is ATCLVYGDPH…TDQDEDQECQ (178 aa). 2 disulfides stabilise this stretch: Cys1156-Cys1291 and Cys1178-Cys1330. Over residues 1302–1316 the composition is skewed to basic and acidic residues; the sequence is HLKLDGSPAGDKEEL. The disordered stretch occupies residues 1302–1323; sequence HLKLDGSPAGDKEELGNSWQTD. Positions 1426–1479 constitute a TIL 2 domain; that stretch reads CPPNSKYSLCAKPCPDTCHSGFSGMFCSDRCVEACECNPGFVLSGLECIPRSQC. Positions 1480 to 1535 constitute a VWFC 2 domain; it reads GCLHPAGSYFKVGERWYKPGCKELCVCESNNRIRCQPWRCRAQEFCGQQDGIYGCH. The 181-residue stretch at 1540–1720 folds into the VWFD 2 domain; that stretch reads ATCTASGDPH…LPESSEPGCF (181 aa). Disulfide bonds link Cys1542–Cys1680 and Cys1564–Cys1719. Asn1685 and Asn1804 each carry an N-linked (GlcNAc...) asparagine glycan. The TIL 3 domain occupies 1812-1867; that stretch reads CPPGSSYSPCSSPCPDTCSSINNPRDCPKALPCAESCECQKGHILSGTSCVPLGQC. The region spanning 1868 to 1924 is the VWFC 3 domain; the sequence is GCTDPAGSYHPVGERWYTENTCTRLCTCSVHNNITCFQSTCKPNQICWALDGLLHCR. Asn1900 and Asn1946 each carry an N-linked (GlcNAc...) asparagine glycan. The 180-residue stretch at 1929–2108 folds into the VWFD 3 domain; that stretch reads GVCQLPGESH…KDKDIDPSCQ (180 aa). 2 disulfides stabilise this stretch: Cys1931/Cys2069 and Cys1953/Cys2107. Residue Asn2203 is glycosylated (N-linked (GlcNAc...) asparagine). A TIL 4 domain is found at 2211-2267; that stretch reads CPAYSSYTNCLPSCSPSCWDLDGRCEGAKVPSACAEGCICQPGYVLSEDKCVPRSQC. Residues 2268-2329 enclose the VWFC 4 domain; it reads GCKDAHGGSI…NSNCVSDKSE (62 aa). One can recognise a VWFD 4 domain in the interval 2329–2505; it reads EQCSVYGDPR…SWEVKTEDAL (177 aa). Residues Cys2331 and Cys2468 are joined by a disulfide bond. N-linked (GlcNAc...) asparagine glycans are attached at residues Asn2542 and Asn2701. A VWFC 5 domain is found at 2652–2797; the sequence is CGCTSNGIYY…KREKTQEGDR (146 aa). The EGF-like domain occupies 2708–2744; that stretch reads PESPCLQNPCQNDGQCREQGATFTCECEVGYGGGLCM. Disulfide bonds link Cys2712-Cys2723, Cys2717-Cys2732, and Cys2734-Cys2743. The helical transmembrane segment at 2758–2778 threads the bilayer; that stretch reads NLVGVLLGLLVPVVVVLLAVT. Residues 2779–2812 are Cytoplasmic-facing; the sequence is RECIYRTRRKREKTQEGDRLARLVDTDTVLDCAC.

In terms of assembly, probably forms covalent oligomers. As to expression, in testis, primarily in haploid spermatids.

It is found in the cell membrane. Binds in a species-specific manner to the zona pellucida of the egg. May be involved in gamete recognition and/or signaling. This Homo sapiens (Human) protein is Zonadhesin (ZAN).